A 496-amino-acid chain; its full sequence is L-arabinose isomerase (496 aa).

Mn(2+)-binding residues include Glu-306, Glu-331, His-348, and His-447.

It belongs to the arabinose isomerase family. Requires Mn(2+) as cofactor.

It carries out the reaction beta-L-arabinopyranose = L-ribulose. Its pathway is carbohydrate degradation; L-arabinose degradation via L-ribulose; D-xylulose 5-phosphate from L-arabinose (bacterial route): step 1/3. Its function is as follows. Catalyzes the conversion of L-arabinose to L-ribulose. The polypeptide is L-arabinose isomerase (Geobacillus thermodenitrificans (strain NG80-2)).